A 376-amino-acid chain; its full sequence is Phosphate acyltransferase (376 aa).

A disordered region spans residues 334-376 (AGSLEQAKRDAGGPGSASQMASPIAGPVSGQPAEPYSAQSSKA).

It belongs to the PlsX family. In terms of assembly, homodimer. Probably interacts with PlsY.

Its subcellular location is the cytoplasm. The enzyme catalyses a fatty acyl-[ACP] + phosphate = an acyl phosphate + holo-[ACP]. Its pathway is lipid metabolism; phospholipid metabolism. In terms of biological role, catalyzes the reversible formation of acyl-phosphate (acyl-PO(4)) from acyl-[acyl-carrier-protein] (acyl-ACP). This enzyme utilizes acyl-ACP as fatty acyl donor, but not acyl-CoA. The polypeptide is Phosphate acyltransferase (Paraburkholderia phymatum (strain DSM 17167 / CIP 108236 / LMG 21445 / STM815) (Burkholderia phymatum)).